A 369-amino-acid polypeptide reads, in one-letter code: Phospho-N-acetylmuramoyl-pentapeptide-transferase (369 aa).

Helical transmembrane passes span 30–50 (AAAI…IGYL), 73–93 (LPTM…LLWA), 99–119 (YVWL…IDDY), 140–160 (VSLG…SVLL), 171–191 (LMID…TAVS), 202–222 (GLAA…AYLT), 239–259 (GGEV…FLWF), 266–286 (IFMG…IALL), 291–311 (LLLP…SLQV), and 346–366 (KIVI…LMTL).

This sequence belongs to the glycosyltransferase 4 family. MraY subfamily. The cofactor is Mg(2+).

The protein localises to the cell inner membrane. It catalyses the reaction UDP-N-acetyl-alpha-D-muramoyl-L-alanyl-gamma-D-glutamyl-meso-2,6-diaminopimeloyl-D-alanyl-D-alanine + di-trans,octa-cis-undecaprenyl phosphate = di-trans,octa-cis-undecaprenyl diphospho-N-acetyl-alpha-D-muramoyl-L-alanyl-D-glutamyl-meso-2,6-diaminopimeloyl-D-alanyl-D-alanine + UMP. It functions in the pathway cell wall biogenesis; peptidoglycan biosynthesis. Catalyzes the initial step of the lipid cycle reactions in the biosynthesis of the cell wall peptidoglycan: transfers peptidoglycan precursor phospho-MurNAc-pentapeptide from UDP-MurNAc-pentapeptide onto the lipid carrier undecaprenyl phosphate, yielding undecaprenyl-pyrophosphoryl-MurNAc-pentapeptide, known as lipid I. This chain is Phospho-N-acetylmuramoyl-pentapeptide-transferase, found in Chlorobium phaeobacteroides (strain BS1).